A 256-amino-acid chain; its full sequence is MAVGKNKRLSKGKKGVKKRTVDPFTRKDEYSVKAPSTFQIRDVGKTLVNRTSGLKNANDSLKGRIFEVSLADLQNDEDHAFRKVKLRVDEIQGKNCLTNFHGLDFTTDKLRSLVRKWQSLIEANVTVKTTDDYLLRLFAIAFTKRRPNQIKKTTYARSSQIRAIRKKMTEIMQREAASCSLAQLTHKLIPEVIGREIEKATQGIYPLQNVHIRKVKLLKAPKFDLGALLNLHGESTTDDKGQKVEREFKEQVLESV.

The span at 1 to 18 shows a compositional bias: basic residues; the sequence is MAVGKNKRLSKGKKGVKK. The tract at residues 1-20 is disordered; sequence MAVGKNKRLSKGKKGVKKRT. A2 carries the N-acetylalanine; partial modification.

This sequence belongs to the eukaryotic ribosomal protein eS1 family. In terms of assembly, component of the small ribosomal subunit. Mature ribosomes consist of a small (40S) and a large (60S) subunit. The 40S subunit contains about 33 different proteins and 1 molecule of RNA (18S). The 60S subunit contains about 49 different proteins and 3 molecules of RNA (25S, 5.8S and 5S).

The protein localises to the cytoplasm. The sequence is that of Small ribosomal subunit protein eS1 (rps1) from Aspergillus clavatus (strain ATCC 1007 / CBS 513.65 / DSM 816 / NCTC 3887 / NRRL 1 / QM 1276 / 107).